A 295-amino-acid chain; its full sequence is Myosin light chain kinase A (295 aa).

In terms of domain architecture, Protein kinase spans 8 to 265 (YEFKEELGRG…ATNALNHPWL (258 aa)). Residues 14 to 22 (LGRGAFSIV) and Lys37 each bind ATP. Catalysis depends on Asp130, which acts as the Proton acceptor. 2 positions are modified to phosphothreonine: Thr166 and Thr289. Positions 264–295 (WLKSNNSNNTIDTVKMKEYIVERQKTQTKLVN) are autoinhibitory domain.

This sequence belongs to the protein kinase superfamily. CAMK Ser/Thr protein kinase family. CaMK subfamily. In terms of processing, autophosphorylated. Transiently phosphorylated on Thr-166 and Thr-289. This phosphorylation is gbpC-dependent.

It carries out the reaction L-seryl-[myosin light chain] + ATP = O-phospho-L-seryl-[myosin light chain] + ADP + H(+). It catalyses the reaction L-threonyl-[myosin light chain] + ATP = O-phospho-L-threonyl-[myosin light chain] + ADP + H(+). Its activity is regulated as follows. Possesses an autoinhibitory domain. Autophosphorylation appears to increase the enzymatic activity. Activation is gbdC-dependent. Does not have a calmodulin-binding domain. Functionally, phosphorylates a specific serine in the N-terminus of a myosin light chain. Phosphorylates regulatory myosin light chain (mlcR) during chemotaxis. mlcR phosphorylation increases the motility and actin-activated ATPase activity of myosin, contributing to chemotaxis. This Dictyostelium discoideum (Social amoeba) protein is Myosin light chain kinase A (mlkA).